Consider the following 248-residue polypeptide: Phosphatidylglycerol--prolipoprotein diacylglyceryl transferase (248 aa).

3 helical membrane passes run 6–26, 48–68, and 84–104; these read FSIF…GVIL, ILVW…VIFE, and GGGL…YVIC. Residue arginine 130 coordinates a 1,2-diacyl-sn-glycero-3-phospho-(1'-sn-glycerol). 2 consecutive transmembrane segments (helical) span residues 187-207 and 214-234; these read GQIT…VEGL and IGAL…GVIL.

This sequence belongs to the Lgt family.

Its subcellular location is the cell membrane. The enzyme catalyses L-cysteinyl-[prolipoprotein] + a 1,2-diacyl-sn-glycero-3-phospho-(1'-sn-glycerol) = an S-1,2-diacyl-sn-glyceryl-L-cysteinyl-[prolipoprotein] + sn-glycerol 1-phosphate + H(+). It functions in the pathway protein modification; lipoprotein biosynthesis (diacylglyceryl transfer). In terms of biological role, catalyzes the transfer of the diacylglyceryl group from phosphatidylglycerol to the sulfhydryl group of the N-terminal cysteine of a prolipoprotein, the first step in the formation of mature lipoproteins. In Finegoldia magna (strain ATCC 29328 / DSM 20472 / WAL 2508) (Peptostreptococcus magnus), this protein is Phosphatidylglycerol--prolipoprotein diacylglyceryl transferase.